A 117-amino-acid polypeptide reads, in one-letter code: Large ribosomal subunit protein bL19 (117 aa).

This sequence belongs to the bacterial ribosomal protein bL19 family.

Its function is as follows. This protein is located at the 30S-50S ribosomal subunit interface and may play a role in the structure and function of the aminoacyl-tRNA binding site. In Shewanella pealeana (strain ATCC 700345 / ANG-SQ1), this protein is Large ribosomal subunit protein bL19.